A 519-amino-acid polypeptide reads, in one-letter code: O-fucosyltransferase 1 (519 aa).

Over 1–24 (MRRLGHHRLHGKTGGVGTKGMVAK) the chain is Cytoplasmic. The chain crosses the membrane as a helical; Signal-anchor for type II membrane protein span at residues 25–45 (LSIGVIVLLICTLSLLFSANI). The Lumenal portion of the chain corresponds to 46-519 (GSNREPTRPS…TNSTVTGLER (474 aa)). Residues 67 to 86 (KSGGWRPSSAPRSDWPPPTK) form a disordered region. Asparagine 118 carries N-linked (GlcNAc...) asparagine glycosylation. Position 260–262 (260–262 (HLR)) interacts with substrate. N-linked (GlcNAc...) asparagine glycosylation is found at asparagine 327, asparagine 357, and asparagine 511. The interval 497–519 (RLESIRDPDSTSQTNSTVTGLER) is disordered. Residues 506–519 (STSQTNSTVTGLER) are compositionally biased toward polar residues.

Belongs to the glycosyltransferase GT106 family.

Its subcellular location is the golgi apparatus membrane. It functions in the pathway glycan metabolism. In Arabidopsis thaliana (Mouse-ear cress), this protein is O-fucosyltransferase 1.